The chain runs to 188 residues: Pyridoxal 5'-phosphate synthase subunit PdxT (188 aa).

47-49 (GES) serves as a coordination point for L-glutamine. The Nucleophile role is filled by C79. Residues R106 and 134–135 (IR) contribute to the L-glutamine site. Residues H169 and E171 each act as charge relay system in the active site.

The protein belongs to the glutaminase PdxT/SNO family. As to quaternary structure, in the presence of PdxS, forms a dodecamer of heterodimers. Only shows activity in the heterodimer.

The catalysed reaction is aldehydo-D-ribose 5-phosphate + D-glyceraldehyde 3-phosphate + L-glutamine = pyridoxal 5'-phosphate + L-glutamate + phosphate + 3 H2O + H(+). It carries out the reaction L-glutamine + H2O = L-glutamate + NH4(+). It functions in the pathway cofactor biosynthesis; pyridoxal 5'-phosphate biosynthesis. Catalyzes the hydrolysis of glutamine to glutamate and ammonia as part of the biosynthesis of pyridoxal 5'-phosphate. The resulting ammonia molecule is channeled to the active site of PdxS. The sequence is that of Pyridoxal 5'-phosphate synthase subunit PdxT from Caldicellulosiruptor saccharolyticus (strain ATCC 43494 / DSM 8903 / Tp8T 6331).